Reading from the N-terminus, the 460-residue chain is Chromosomal replication initiator protein DnaA (460 aa).

A domain I, interacts with DnaA modulators region spans residues 1–91; the sequence is MSLINPKVSA…LLWQNEDKSI (91 aa). The tract at residues 91–122 is domain II; that stretch reads ICSIDIQVTEEKNSSSSIISKNKEESVNNLGS. Positions 123 to 342 are domain III, AAA+ region; the sequence is PLDPRFTFDN…GALNKVAHTS (220 aa). ATP is bound by residues G169, G171, K172, and T173. A domain IV, binds dsDNA region spans residues 343–460; that stretch reads LIGRSMTVES…EINQLRKMFK (118 aa).

Belongs to the DnaA family. As to quaternary structure, oligomerizes as a right-handed, spiral filament on DNA at oriC.

It is found in the cytoplasm. Functionally, plays an essential role in the initiation and regulation of chromosomal replication. ATP-DnaA binds to the origin of replication (oriC) to initiate formation of the DNA replication initiation complex once per cell cycle. Binds the DnaA box (a 9 base pair repeat at the origin) and separates the double-stranded (ds)DNA. Forms a right-handed helical filament on oriC DNA; dsDNA binds to the exterior of the filament while single-stranded (ss)DNA is stabiized in the filament's interior. The ATP-DnaA-oriC complex binds and stabilizes one strand of the AT-rich DNA unwinding element (DUE), permitting loading of DNA polymerase. After initiation quickly degrades to an ADP-DnaA complex that is not apt for DNA replication. Binds acidic phospholipids. The protein is Chromosomal replication initiator protein DnaA of Wolbachia sp. subsp. Brugia malayi (strain TRS).